Here is a 728-residue protein sequence, read N- to C-terminus: Catalase-peroxidase 1 (728 aa).

Positions 91–218 (WHGAGTYRIA…LAAVQMGLIY (128 aa)) form a cross-link, tryptophyl-tyrosyl-methioninium (Trp-Tyr) (with M-244). Catalysis depends on His-92, which acts as the Proton acceptor. The segment at residues 218 to 244 (YVNPEGPDGKPDPVAAARDIRDTFARM) is a cross-link (tryptophyl-tyrosyl-methioninium (Tyr-Met) (with W-91)). Heme b is bound at residue His-259.

Belongs to the peroxidase family. Peroxidase/catalase subfamily. As to quaternary structure, homodimer or homotetramer. Requires heme b as cofactor. Formation of the three residue Trp-Tyr-Met cross-link is important for the catalase, but not the peroxidase activity of the enzyme.

The catalysed reaction is H2O2 + AH2 = A + 2 H2O. The enzyme catalyses 2 H2O2 = O2 + 2 H2O. Its function is as follows. Bifunctional enzyme with both catalase and broad-spectrum peroxidase activity. The sequence is that of Catalase-peroxidase 1 from Burkholderia vietnamiensis (strain G4 / LMG 22486) (Burkholderia cepacia (strain R1808)).